A 486-amino-acid chain; its full sequence is Virulence sensor protein PhoQ (486 aa).

Topologically, residues 1 to 16 (MKKLLRLFFPLSLRVR) are cytoplasmic. A helical transmembrane segment spans residues 17–37 (FLLATAAVVLVLSLAYGMVAL). Topologically, residues 38-194 (IGYSVSFDKT…LKSSYMVWSW (157 aa)) are periplasmic. Positions 151 and 152 each coordinate a divalent metal cation. Residues 195–215 (FIYVLSANLLLVIPLLWVAAW) form a helical membrane-spanning segment. One can recognise an HAMP domain in the interval 215-266 (WWSLRPIEALAKEVRELEEHNRELLNPATTRELTSLVRNLNRLLKSERERYD). At 216–486 (WSLRPIEALA…GRQHSAPKDE (271 aa)) the chain is on the cytoplasmic side. The region spanning 274–480 (DLTHSLKTPL…RMEVIFGRQH (207 aa)) is the Histidine kinase domain. His-277 carries the post-translational modification Phosphohistidine; by autocatalysis. Asn-385 is a binding site for Mg(2+). ATP-binding positions include 385 to 393 (NVLDNACKY), 415 to 420 (DDGPGI), and 434 to 446 (RVDT…GVGL). A Mg(2+)-binding site is contributed by Gln-442.

As to quaternary structure, homodimer.

It localises to the cell inner membrane. The catalysed reaction is ATP + protein L-histidine = ADP + protein N-phospho-L-histidine.. Functionally, member of the two-component regulatory system PhoP/PhoQ involved in virulence and adaptation to low Mg(2+) environments. In low periplasmic Mg(2+), PhoQ functions as a membrane-associated protein kinase that undergoes autophosphorylation and subsequently transfers the phosphate to PhoP, which results in the expression of PhoP-activated genes (PAG) and repression of PhoP-repressed genes (PRG). In high periplasmic Mg(2+), acts as a protein phosphatase that dephosphorylates phospho-PhoP, which results in the repression of PAG and may lead to expression of some PRG. Necessary for resistance to killing by polymorphonuclear leukocytes (PMNs) and cationic antimicrobial peptides (CAMP) they produce. This Shigella flexneri protein is Virulence sensor protein PhoQ (phoQ).